Here is a 205-residue protein sequence, read N- to C-terminus: Holliday junction resolvase RecU (205 aa).

Residues 1 to 22 are disordered; the sequence is MAINYPAGTRRRTAQAKNTMRT. T90, D92, D105, and Q124 together coordinate Mg(2+).

This sequence belongs to the RecU family. The cofactor is Mg(2+).

The protein resides in the cytoplasm. It carries out the reaction Endonucleolytic cleavage at a junction such as a reciprocal single-stranded crossover between two homologous DNA duplexes (Holliday junction).. In terms of biological role, endonuclease that resolves Holliday junction intermediates in genetic recombination. Cleaves mobile four-strand junctions by introducing symmetrical nicks in paired strands. Promotes annealing of linear ssDNA with homologous dsDNA. Required for DNA repair, homologous recombination and chromosome segregation. This chain is Holliday junction resolvase RecU, found in Leuconostoc citreum (strain KM20).